Consider the following 921-residue polypeptide: Protein translocase subunit SecA (921 aa).

ATP contacts are provided by residues Q86, 104-108 (GEGKT), and D497. Residues 829 to 838 (QQAPQQQPQQ) show a composition bias toward low complexity. A disordered region spans residues 829–921 (QQAPQQQPQQ…CHGAIETQKA (93 aa)). The span at 839-855 (VAPPPRPQPPQPAPQPP) shows a compositional bias: pro residues. The Zn(2+) site is built by C901, C903, C912, and H913.

Belongs to the SecA family. Monomer and homodimer. Part of the essential Sec protein translocation apparatus which comprises SecA, SecYEG and auxiliary proteins SecDF-YajC and YidC. The cofactor is Zn(2+).

It is found in the cell inner membrane. It localises to the cytoplasm. It carries out the reaction ATP + H2O + cellular proteinSide 1 = ADP + phosphate + cellular proteinSide 2.. Functionally, part of the Sec protein translocase complex. Interacts with the SecYEG preprotein conducting channel. Has a central role in coupling the hydrolysis of ATP to the transfer of proteins into and across the cell membrane, serving both as a receptor for the preprotein-SecB complex and as an ATP-driven molecular motor driving the stepwise translocation of polypeptide chains across the membrane. This Hyphomonas neptunium (strain ATCC 15444) protein is Protein translocase subunit SecA.